The following is a 128-amino-acid chain: U24-ctenitoxin-Pn1a (128 aa).

2 Thyroglobulin type-1 domains span residues 4 to 67 and 72 to 127; these read KSDC…ECGC and KERK…SLKC. Intrachain disulfides connect cysteine 7/cysteine 27, cysteine 38/cysteine 45, cysteine 47/cysteine 67, and cysteine 107/cysteine 127.

In terms of tissue distribution, expressed by the venom gland.

Its subcellular location is the secreted. In terms of biological role, cysteine proteinase inhibitor. This Phoneutria nigriventer (Brazilian armed spider) protein is U24-ctenitoxin-Pn1a.